A 493-amino-acid polypeptide reads, in one-letter code: Acetylcholine receptor subunit epsilon (493 aa).

An N-terminal signal peptide occupies residues 1–20 (MARAPLGVLLLLGLLGRGVG). The Extracellular segment spans residues 21–239 (KNEELRLYHH…VIYSLIIRRK (219 aa)). 2 N-linked (GlcNAc...) asparagine glycosylation sites follow: N86 and N161. C148 and C162 are disulfide-bonded. A helical membrane pass occupies residues 240–264 (PLFYVINIIVPCVLISGLVLLAYFL). The Cytoplasmic segment spans residues 265-272 (PAQAGGQK). The chain crosses the membrane as a helical span at residues 273–291 (CTVSINVLLAQTVFLFLIA). Residues 292-306 (QKIPETSLSVPLLGR) lie on the Extracellular side of the membrane. The helical transmembrane segment at 307 to 328 (FLIFVMVVATLIVMNCVIVLNV) threads the bilayer. At 329-456 (SQRTPTTHAM…WVRMGNALDN (128 aa)) the chain is on the cytoplasmic side. A helical membrane pass occupies residues 457–480 (ICFWAALVLFSVGSSLIFLGAYFN). The Extracellular segment spans residues 481–493 (RVPDLPYAPCIQP).

This sequence belongs to the ligand-gated ion channel (TC 1.A.9) family. Acetylcholine receptor (TC 1.A.9.1) subfamily. Epsilon/CHRNE sub-subfamily. In terms of assembly, pentamer of two alpha chains, and one each of the beta, delta, and gamma (in immature muscle) or epsilon (in mature muscle) chains. The muscle heteropentamer composed of alpha-1, beta-1, delta, epsilon subunits interacts with the alpha-conotoxin ImII.

The protein resides in the postsynaptic cell membrane. The protein localises to the cell membrane. It carries out the reaction K(+)(in) = K(+)(out). It catalyses the reaction Na(+)(in) = Na(+)(out). In terms of biological role, after binding acetylcholine, the AChR responds by an extensive change in conformation that affects all subunits and leads to opening of an ion-conducting channel across the plasma membrane. This Homo sapiens (Human) protein is Acetylcholine receptor subunit epsilon.